Consider the following 410-residue polypeptide: Extracellular serine proteinase (410 aa).

Positions 1-19 (MKRGGLWLLLGLLVLSACS) are cleaved as a signal peptide. A propeptide spanning residues 20–132 (SNPPAASTQE…IEADQEVRAF (113 aa)) is cleaved from the precursor. One can recognise an Inhibitor I9 domain in the interval 45–130 (YIVVYKENAD…AYIEADQEVR (86 aa)). The Peptidase S8 domain maps to 139 to 410 (TWGLDRIDQR…SPNLLLYTPF (272 aa)). Active-site charge relay system residues include Asp171, His204, and Ser356.

This sequence belongs to the peptidase S8 family. Contains 4 Cys residues that form two disulfide bonds. Post-translationally, glycosylated. This proteinase has a 0.7% carbohydrate content.

It is found in the secreted. Functionally, serine proteinase with preferred activity for amino acids with aromatic side groups at the P1' side of the scissible bond. The polypeptide is Extracellular serine proteinase (Thermus sp. (strain Rt41A)).